The sequence spans 343 residues: tRNA N6-adenosine threonylcarbamoyltransferase (343 aa).

Fe cation is bound by residues histidine 120 and histidine 124. Residues 142–146, aspartate 175, glycine 188, aspartate 192, and asparagine 281 contribute to the substrate site; that span reads VVSGG. Residue aspartate 310 coordinates Fe cation.

Belongs to the KAE1 / TsaD family. Requires Fe(2+) as cofactor.

Its subcellular location is the cytoplasm. It carries out the reaction L-threonylcarbamoyladenylate + adenosine(37) in tRNA = N(6)-L-threonylcarbamoyladenosine(37) in tRNA + AMP + H(+). Its function is as follows. Required for the formation of a threonylcarbamoyl group on adenosine at position 37 (t(6)A37) in tRNAs that read codons beginning with adenine. Is involved in the transfer of the threonylcarbamoyl moiety of threonylcarbamoyl-AMP (TC-AMP) to the N6 group of A37, together with TsaE and TsaB. TsaD likely plays a direct catalytic role in this reaction. This chain is tRNA N6-adenosine threonylcarbamoyltransferase, found in Bacillus anthracis.